Reading from the N-terminus, the 334-residue chain is DNA-directed RNA polymerase subunit alpha (334 aa).

Residues 1-234 (MQRSLNEFLT…QQLAVFVDFD (234 aa)) are alpha N-terminal domain (alpha-NTD). Residues 248-334 (IDPILLRPVD…IRGDDRVLGG (87 aa)) are alpha C-terminal domain (alpha-CTD).

It belongs to the RNA polymerase alpha chain family. As to quaternary structure, homodimer. The RNAP catalytic core consists of 2 alpha, 1 beta, 1 beta' and 1 omega subunit. When a sigma factor is associated with the core the holoenzyme is formed, which can initiate transcription.

It catalyses the reaction RNA(n) + a ribonucleoside 5'-triphosphate = RNA(n+1) + diphosphate. Its function is as follows. DNA-dependent RNA polymerase catalyzes the transcription of DNA into RNA using the four ribonucleoside triphosphates as substrates. This chain is DNA-directed RNA polymerase subunit alpha, found in Hahella chejuensis (strain KCTC 2396).